Consider the following 220-residue polypeptide: Ribose-5-phosphate isomerase A (220 aa).

Residues 28–31 (TGST), 81–84 (DGAD), and 94–97 (KGGG) contribute to the substrate site. Glu103 functions as the Proton acceptor in the catalytic mechanism. Lys121 provides a ligand contact to substrate.

This sequence belongs to the ribose 5-phosphate isomerase family. As to quaternary structure, homodimer.

The enzyme catalyses aldehydo-D-ribose 5-phosphate = D-ribulose 5-phosphate. It functions in the pathway carbohydrate degradation; pentose phosphate pathway; D-ribose 5-phosphate from D-ribulose 5-phosphate (non-oxidative stage): step 1/1. In terms of biological role, catalyzes the reversible conversion of ribose-5-phosphate to ribulose 5-phosphate. This chain is Ribose-5-phosphate isomerase A, found in Shewanella sp. (strain W3-18-1).